Consider the following 362-residue polypeptide: Porin Omp2b (362 aa).

The first 22 residues, 1 to 22 (MNIKSLLLGSAAALVAASGAQA), serve as a signal peptide directing secretion.

Belongs to the alphaproteobacteria porin family. In terms of assembly, homotrimer.

The protein localises to the cell outer membrane. In terms of biological role, forms passive diffusion pores that allow small molecular weight hydrophilic materials across the outer membrane. This Brucella neotomae protein is Porin Omp2b (omp2b).